A 286-amino-acid polypeptide reads, in one-letter code: MVAVIIKGNEVAEKKRAQLTEEVVKLKEQGIVPGLAVILVGEDPASRSYVKGKEKGCEQVGIYSELIELPETITEERLLAEIDRLNGDDRINGILVQLPLPKHIEEKAIIERISPEKDVDGFHPISVGRMMTGQDTFLPCTPHGIVELVKETSLDISGKHVVVIGRSNIVGKPVGQLFLNENATVTYCHSKTQNMKELSKLADILIVAVGRPKMITADYIKEGAVVIDVGVNRLETGKLCGDVDFDNVLDVAGYITPVPKGVGPMTITMLLHNTVESAKRAGVVCK.

Residues 165 to 167 (GRS), serine 190, and valine 231 each bind NADP(+).

This sequence belongs to the tetrahydrofolate dehydrogenase/cyclohydrolase family. As to quaternary structure, homodimer.

It catalyses the reaction (6R)-5,10-methylene-5,6,7,8-tetrahydrofolate + NADP(+) = (6R)-5,10-methenyltetrahydrofolate + NADPH. The catalysed reaction is (6R)-5,10-methenyltetrahydrofolate + H2O = (6R)-10-formyltetrahydrofolate + H(+). It functions in the pathway one-carbon metabolism; tetrahydrofolate interconversion. Catalyzes the oxidation of 5,10-methylenetetrahydrofolate to 5,10-methenyltetrahydrofolate and then the hydrolysis of 5,10-methenyltetrahydrofolate to 10-formyltetrahydrofolate. This is Bifunctional protein FolD from Bacillus cereus (strain B4264).